Reading from the N-terminus, the 136-residue chain is Peptide methionine sulfoxide reductase B5 (136 aa).

The MsrB domain maps to 14–135; that stretch reads DEEWRAVLSP…NSVSIKFTPA (122 aa). Zn(2+) is bound by residues C53, C56, C99, and C102. A disulfide bridge connects residues C71 and C124. C124 serves as the catalytic Nucleophile.

The protein belongs to the MsrB Met sulfoxide reductase family. Zn(2+) serves as cofactor.

The protein resides in the cytoplasm. The protein localises to the cytosol. The enzyme catalyses L-methionyl-[protein] + [thioredoxin]-disulfide + H2O = L-methionyl-(R)-S-oxide-[protein] + [thioredoxin]-dithiol. In terms of biological role, catalyzes the reduction of methionine sulfoxide (MetSO) to methionine in proteins. Plays a protective role against oxidative stress by restoring activity to proteins that have been inactivated by methionine oxidation. MSRB family specifically reduces the MetSO R-enantiomer. This chain is Peptide methionine sulfoxide reductase B5 (MSRB5), found in Oryza sativa subsp. japonica (Rice).